Reading from the N-terminus, the 220-residue chain is Peptide methionine sulfoxide reductase MsrA (220 aa).

The active site involves Cys52.

The protein belongs to the MsrA Met sulfoxide reductase family.

It catalyses the reaction L-methionyl-[protein] + [thioredoxin]-disulfide + H2O = L-methionyl-(S)-S-oxide-[protein] + [thioredoxin]-dithiol. It carries out the reaction [thioredoxin]-disulfide + L-methionine + H2O = L-methionine (S)-S-oxide + [thioredoxin]-dithiol. Functionally, has an important function as a repair enzyme for proteins that have been inactivated by oxidation. Catalyzes the reversible oxidation-reduction of methionine sulfoxide in proteins to methionine. The sequence is that of Peptide methionine sulfoxide reductase MsrA from Corynebacterium diphtheriae (strain ATCC 700971 / NCTC 13129 / Biotype gravis).